The primary structure comprises 279 residues: Ankyrin repeat domain-containing protein 7 (279 aa).

Over residues 1–11 (MKKFFPFRGKR) the composition is skewed to basic residues. A disordered region spans residues 1 to 25 (MKKFFPFRGKRKTDDSHSHSSEVPI). ANK repeat units lie at residues 80–109 (RSRTPLHLACANGYTNIVSLLIENQCKINV), 113–142 (ENRTPLIKAVECQQESCATVLLLHGADPNL), 146–175 (YSNTALHYAVCGQNISLANKLLQYKANLEA), 179–208 (DGHTPLLLAVAENNENMVKFLLKKGADVNA), and 212–241 (NHRTAIMIALIVEPTSSVKLLLQQDTDLAH).

The chain is Ankyrin repeat domain-containing protein 7 (Ankrd7) from Mus musculus (Mouse).